A 1454-amino-acid chain; its full sequence is Alpha-2-macroglobulin-like protein 1 (1454 aa).

Positions 1-17 (MWAQLLLGMLALSPAIA) are cleaved as a signal peptide. Cys40 and Cys78 are oxidised to a cystine. The N-linked (GlcNAc...) asparagine glycan is linked to Asn120. 2 cysteine pairs are disulfide-bonded: Cys241–Cys291 and Cys259–Cys279. N-linked (GlcNAc...) asparagine glycans are attached at residues Asn281 and Asn409. Intrachain disulfides connect Cys464/Cys557, Cys589/Cys769, Cys819/Cys847, Cys845/Cys881, Cys919/Cys1307, Cys1075/Cys1123, and Cys1338/Cys1453. The tract at residues 695 to 726 (SHRSPEYSTAMGAGGGHPEAFESSTPLHQAED) is bait region. N-linked (GlcNAc...) asparagine glycosylation is present at Asn857. The segment at residues 970-973 (CGEQ) is a cross-link (isoglutamyl cysteine thioester (Cys-Gln)). N-linked (GlcNAc...) asparagine glycosylation occurs at Asn1020.

Belongs to the protease inhibitor I39 (alpha-2-macroglobulin) family. Monomer. In the epidermis, expressed predominantly in the granular layer at the apical edge of keratinocytes (at protein level). Also detected in placenta, testis and thymus but not in epithelia of kidney, lung, small intestine or colon.

It is found in the secreted. In terms of biological role, is able to inhibit all four classes of proteinases by a unique 'trapping' mechanism. This protein has a peptide stretch, called the 'bait region' which contains specific cleavage sites for different proteinases. When a proteinase cleaves the bait region, a conformational change is induced in the protein which traps the proteinase. The entrapped enzyme remains active against low molecular weight substrates (activity against high molecular weight substrates is greatly reduced). Following cleavage in the bait region a thioester bond is hydrolyzed and mediates the covalent binding of the protein to the proteinase. Displays inhibitory activity against chymotrypsin, papain, thermolysin, subtilisin A and, to a lesser extent, elastase but not trypsin. May play an important role during desquamation by inhibiting extracellular proteases. This chain is Alpha-2-macroglobulin-like protein 1, found in Homo sapiens (Human).